The sequence spans 602 residues: MGRKWTYCVVYTIIQIQFFRGVWEELFNVGDDVYALPGSDINLTCQTKEKNFLVQMQWSKVTDKNDMIALYHPQYGLYCGQEHACESQVAATETEKGVTNWTLYLRNISSALGGKYECIFTLYPEGIKTTVYNLIVEPYTQDEHNYTIEIETNRTLEIPCFQNTSSEIPPRFTFSWLVEKDGVEEVLFTHHHHVNNSTSFKGRIRLGGDYRLHLSPVQIQDDGRTFSCHLTVNPLKAWKMSTTVKVFAKPEILMTVENSTMDVLGERVFTCLLKNVFPKANITWFIDGRFLQGNEEGIYITNEEKNCSSGFWELKSVLTRMHSGPSQSNNMTAWCMALSPGPRNKMWNTSSQPITVSFDSVIAPTKHLPTVTGSTLGTQPFSDAGVSPTGYLATPSVTIVDENGLTPDATPQTSNSSMTTKDGNYLEASSGTDAKNSSRAAASSKSGSWPFPFTSPPEWHSLPGTSTGPQEPDSPVSWIPSEVHTSAPLDASLAPHDTIISTTTEFPNVLTTANGTTKIDHGPITSIIVNQPSDGMSWPVLVAALLFFCTLLFGLGVRKWYRYQNEIMERPPPFKPPPPPIKYTYIQEPIGCDLCCHEMEVL.

A signal peptide spans 1 to 21 (MGRKWTYCVVYTIIQIQFFRG). Topologically, residues 22-536 (VWEELFNVGD…IIVNQPSDGM (515 aa)) are extracellular. Ig-like V-type domains lie at 24–134 (EELF…VYNL) and 138–244 (PYTQ…STTV). 16 N-linked (GlcNAc...) asparagine glycosylation sites follow: asparagine 42, asparagine 100, asparagine 107, asparagine 145, asparagine 153, asparagine 163, asparagine 195, asparagine 196, asparagine 258, asparagine 281, asparagine 306, asparagine 330, asparagine 348, asparagine 415, asparagine 436, and asparagine 514. The cysteines at positions 45 and 118 are disulfide-linked. Cysteine 160 and cysteine 228 form a disulfide bridge. The Ig-like C2-type domain maps to 250–355 (PEILMTVENS…MWNTSSQPIT (106 aa)). A disulfide bond links cysteine 271 and cysteine 335. Positions 402–478 (ENGLTPDATP…PQEPDSPVSW (77 aa)) are disordered. Residues 409–433 (ATPQTSNSSMTTKDGNYLEASSGTD) show a composition bias toward polar residues. The span at 434–448 (AKNSSRAAASSKSGS) shows a compositional bias: low complexity. Residues 537–557 (SWPVLVAALLFFCTLLFGLGV) traverse the membrane as a helical segment. The Cytoplasmic portion of the chain corresponds to 558–602 (RKWYRYQNEIMERPPPFKPPPPPIKYTYIQEPIGCDLCCHEMEVL).

As to quaternary structure, homodimer; disulfide-linked. Interacts with PVR.

Its subcellular location is the membrane. May be involved in adhesive interactions of activated T and NK cells during the late phase of the immune response. Promotes NK cell-target adhesion by interacting with PVR present on target cells. May function at a time after T and NK cells have penetrated the endothelium using integrins and selectins, when they are actively engaging diseased cells and moving within areas of inflammation. The sequence is that of T-cell surface protein tactile (Cd96) from Mus musculus (Mouse).